A 672-amino-acid polypeptide reads, in one-letter code: DNA ligase (672 aa).

NAD(+) is bound by residues 32 to 36 (DAEYD), 81 to 82 (SL), and Glu113. Lys115 functions as the N6-AMP-lysine intermediate in the catalytic mechanism. NAD(+) contacts are provided by Arg136, Glu173, Lys290, and Lys314. Zn(2+) contacts are provided by Cys408, Cys411, Cys426, and Cys432. In terms of domain architecture, BRCT spans 592–672 (EIDSPFAGKT…EMIRLLGESS (81 aa)).

The protein belongs to the NAD-dependent DNA ligase family. LigA subfamily. Mg(2+) serves as cofactor. It depends on Mn(2+) as a cofactor.

It carries out the reaction NAD(+) + (deoxyribonucleotide)n-3'-hydroxyl + 5'-phospho-(deoxyribonucleotide)m = (deoxyribonucleotide)n+m + AMP + beta-nicotinamide D-nucleotide.. Functionally, DNA ligase that catalyzes the formation of phosphodiester linkages between 5'-phosphoryl and 3'-hydroxyl groups in double-stranded DNA using NAD as a coenzyme and as the energy source for the reaction. It is essential for DNA replication and repair of damaged DNA. The protein is DNA ligase of Yersinia enterocolitica serotype O:8 / biotype 1B (strain NCTC 13174 / 8081).